The following is a 359-amino-acid chain: Nicotinate-nucleotide--dimethylbenzimidazole phosphoribosyltransferase (359 aa).

Glu318 functions as the Proton acceptor in the catalytic mechanism.

The protein belongs to the CobT family. In terms of assembly, homodimer.

It carries out the reaction 5,6-dimethylbenzimidazole + nicotinate beta-D-ribonucleotide = alpha-ribazole 5'-phosphate + nicotinate + H(+). It functions in the pathway nucleoside biosynthesis; alpha-ribazole biosynthesis; alpha-ribazole from 5,6-dimethylbenzimidazole: step 1/2. Functionally, catalyzes the synthesis of alpha-ribazole-5'-phosphate from nicotinate mononucleotide (NAMN) and 5,6-dimethylbenzimidazole (DMB). The chain is Nicotinate-nucleotide--dimethylbenzimidazole phosphoribosyltransferase from Escherichia coli O17:K52:H18 (strain UMN026 / ExPEC).